A 125-amino-acid chain; its full sequence is Phosphoribosyl-AMP cyclohydrolase (125 aa).

Mg(2+) is bound at residue Asp-74. Cys-75 is a Zn(2+) binding site. Mg(2+)-binding residues include Asp-76 and Asp-78. Positions 92 and 99 each coordinate Zn(2+).

This sequence belongs to the PRA-CH family. In terms of assembly, homodimer. Mg(2+) serves as cofactor. It depends on Zn(2+) as a cofactor.

It localises to the cytoplasm. It carries out the reaction 1-(5-phospho-beta-D-ribosyl)-5'-AMP + H2O = 1-(5-phospho-beta-D-ribosyl)-5-[(5-phospho-beta-D-ribosylamino)methylideneamino]imidazole-4-carboxamide. Its pathway is amino-acid biosynthesis; L-histidine biosynthesis; L-histidine from 5-phospho-alpha-D-ribose 1-diphosphate: step 3/9. Functionally, catalyzes the hydrolysis of the adenine ring of phosphoribosyl-AMP. The polypeptide is Phosphoribosyl-AMP cyclohydrolase (Geobacter sulfurreducens (strain ATCC 51573 / DSM 12127 / PCA)).